Consider the following 733-residue polypeptide: MDLSMKKFAVRRFFSVYLRRKSRSKSSSLSRLEEEGVVKEIDISHHVKEGFEKADPSQFELLKVLGQGSYGKVFLVRKVKGSDAGQLYAMKVLKKATLKVRDRVRSKMERDILAEVNHPFIVKLHYAFQTEGKLYLILDFLRGGDLFTRLSKEVMFTEEDVKFYLAELALALDHLHSLGIIYRDLKPENILLDEEGHIKITDFGLSKEAIDHDKRAYSFCGTIEYMAPEVVNRRGHTQSADWWSFGVLMFEMLTGSLPFQGKDRKETMALILKAKLGMPQFLSGEAQSLLRALFKRNPCNRLGAGIDGVEEIKRHPFFVTIDWNTLYRKEIKPPFKPAVGRPEDTFHFDPEFTARTPTDSPGVPPSANAHHLFRGFSFVASSLIQEPSQQDLHKVPVHPIVQQLHGNNIHFTDGYEIKEDIGVGSYSVCKRCVHKATDTEYAVKIIDKSKRDPSEEIEILLRYGQHPNIITLKDVYDDGKFVYLVMELMRGGELLDRILRQRYFSEREASDVLCTITKTMDYLHSQGVVHRDLKPSNILYRDESGSPESIRVCDFGFAKQLRAGNGLLMTPCYTANFVAPEVLKRQGYDAACDIWSLGILLYTMLAGFTPFANGPDDTPEEILARIGSGKYALSGGNWDSISDAAKDVVSKMLHVDPHQRLTAMQVLKHPWVVNREYLSPNQLSRQDVHLVKGAMAATYFALNRTPQAPRLEPVLSSNLAQRRGMKRLTSTRL.

Positions Phe-59–Phe-318 constitute a Protein kinase 1 domain. Residues Leu-65–Val-73 and Lys-91 contribute to the ATP site. Residue Asp-184 is the Proton acceptor of the active site. Position 218 is a phosphoserine; by PDPK1 (Ser-218). One can recognise an AGC-kinase C-terminal domain in the interval Val-319–Ser-388. The residue at position 377 (Ser-377) is a Phosphoserine. The Protein kinase 2 domain occupies Tyr-415–Val-672. ATP contacts are provided by residues Ile-421–Cys-429 and Lys-444. Asp-532 serves as the catalytic Proton acceptor.

The protein belongs to the protein kinase superfamily. AGC Ser/Thr protein kinase family. S6 kinase subfamily. In terms of assembly, forms a complex with either MAPK1/ERK2 or MAPK3/ERK1 in quiescent cells. Transiently dissociates following mitogenic stimulation. Interacts with FBXO5; cooperate to induce the metaphase arrest of early blastomeres; increases and stabilizes interaction of FBXO5 with CDC20. Mg(2+) serves as cofactor. In terms of processing, activated by phosphorylation at Ser-218 by PDPK1. Autophosphorylated on Ser-377, as part of the activation process. May be phosphorylated at Thr-356 and Ser-360 by MAPK1/ERK2 and MAPK3/ERK1. N-terminal myristoylation results in an activated kinase in the absence of added growth factors. Widely expressed with higher expression in lung, skeletal muscle, brain, uterus, ovary, thyroid and prostate.

The protein localises to the nucleus. It is found in the cytoplasm. It carries out the reaction L-seryl-[protein] + ATP = O-phospho-L-seryl-[protein] + ADP + H(+). The enzyme catalyses L-threonyl-[protein] + ATP = O-phospho-L-threonyl-[protein] + ADP + H(+). Upon extracellular signal or mitogen stimulation, phosphorylated at Thr-570 in the C-terminal kinase domain (CTKD) by MAPK1/ERK2 and MAPK3/ERK1. The activated CTKD then autophosphorylates Ser-377, allowing binding of PDPK1, which in turn phosphorylates Ser-218 in the N-terminal kinase domain (NTDK) leading to the full activation of the protein and subsequent phosphorylation of the substrates by the NTKD. In terms of biological role, serine/threonine-protein kinase that acts downstream of ERK (MAPK1/ERK2 and MAPK3/ERK1) signaling and mediates mitogenic and stress-induced activation of transcription factors, regulates translation, and mediates cellular proliferation, survival, and differentiation. May function as tumor suppressor in epithelial ovarian cancer cells. This is Ribosomal protein S6 kinase alpha-2 (RPS6KA2) from Homo sapiens (Human).